Consider the following 374-residue polypeptide: Putative glutamate--cysteine ligase 2 (374 aa).

The protein belongs to the glutamate--cysteine ligase type 2 family. YbdK subfamily.

The catalysed reaction is L-cysteine + L-glutamate + ATP = gamma-L-glutamyl-L-cysteine + ADP + phosphate + H(+). Functionally, ATP-dependent carboxylate-amine ligase which exhibits weak glutamate--cysteine ligase activity. The protein is Putative glutamate--cysteine ligase 2 of Paracidovorax citrulli (strain AAC00-1) (Acidovorax citrulli).